The following is a 529-amino-acid chain: Peptide chain release factor 3 (529 aa).

The tr-type G domain maps to 11–280; the sequence is SKRRTFAIIS…GLTEWAPAPK (270 aa). GTP contacts are provided by residues 20–27, 88–92, and 142–145; these read SHPDAGKT, DTPGH, and NKLD.

The protein belongs to the TRAFAC class translation factor GTPase superfamily. Classic translation factor GTPase family. PrfC subfamily.

It localises to the cytoplasm. Increases the formation of ribosomal termination complexes and stimulates activities of RF-1 and RF-2. It binds guanine nucleotides and has strong preference for UGA stop codons. It may interact directly with the ribosome. The stimulation of RF-1 and RF-2 is significantly reduced by GTP and GDP, but not by GMP. This is Peptide chain release factor 3 from Vibrio campbellii (strain ATCC BAA-1116).